We begin with the raw amino-acid sequence, 227 residues long: MKVSYHGHSVVKIETNGKVILIDPFLTGNPKTDLKAEDVNVDAILLSHGHGDHVGDTVELAKKNNAVVVAPFELATFLSWQGVNTHPMHIGGSHEFDFGKVKFTQAFHGSSYIDEENKTITYTGMPAGILFTAEEKTLYHAGDTALFSDMKLIGELNNIDVAFLPIGDNFTMGPEDAVLAAKWVQAKTVVPMHYNTFPVIEQDPYQFVEKLQNCTGKVLEAGESITL.

It belongs to the UPF0173 family.

The polypeptide is UPF0173 metal-dependent hydrolase BCE33L4354 (Bacillus cereus (strain ZK / E33L)).